Here is a 422-residue protein sequence, read N- to C-terminus: CinA-like protein (422 aa).

It belongs to the CinA family.

The protein is CinA-like protein of Mycolicibacterium gilvum (strain PYR-GCK) (Mycobacterium gilvum (strain PYR-GCK)).